The following is a 164-amino-acid chain: C-phycoerythrin alpha chain (164 aa).

Residues cysteine 82 and cysteine 139 each contribute to the (2R,3E)-phycoerythrobilin site.

This sequence belongs to the phycobiliprotein family. Heterodimer of an alpha and a beta chain. Post-translationally, contains two covalently linked bilin chromophores.

It localises to the cellular thylakoid membrane. Functionally, light-harvesting photosynthetic bile pigment-protein from the phycobiliprotein complex. The polypeptide is C-phycoerythrin alpha chain (cpeA) (Microchaete diplosiphon (Fremyella diplosiphon)).